The chain runs to 71 residues: MAVIMVDQAEGGQCQRKCLGHCSKKCPKHPQCRKRCIRRCFGYCLGDEPQQMALDDESDPLVILPNNYNDY.

The signal sequence occupies residues 1-11 (MAVIMVDQAEG). A propeptide spanning residues 46-71 (GDEPQQMALDDESDPLVILPNNYNDY) is cleaved from the precursor.

Post-translationally, contains 4 disulfide bonds.

The protein resides in the secreted. The protein localises to the target cell membrane. Antimicrobial peptide with inhibitory activity against both Gram-positive and Gram-negative bacteria (E.coli (MIC=0.25 ug/ml), M.lysodeikticus (MIC=0.25 ug/ml), and V.alginolyticus (MIC=0.25 ug/ml)). Does not show hemolytic activity. The sequence is that of Equinin B from Actinia equina (Beadlet anemone).